The following is a 324-amino-acid chain: uncharacterized protein (324 aa).

It to the C-terminal of para-aminobenzoate synthase component I.

This is an uncharacterized protein from Pasteurella multocida (strain Pm70).